We begin with the raw amino-acid sequence, 190 residues long: Ribosome hibernation promotion factor (190 aa).

The protein belongs to the HPF/YfiA ribosome-associated protein family. Long HPF subfamily. As to quaternary structure, interacts with 100S ribosomes.

It localises to the cytoplasm. Its function is as follows. Required for dimerization of active 70S ribosomes into 100S ribosomes in stationary phase; 100S ribosomes are translationally inactive and sometimes present during exponential growth. This chain is Ribosome hibernation promotion factor, found in Rhizobium meliloti (strain 1021) (Ensifer meliloti).